The primary structure comprises 507 residues: Glutamyl-tRNA(Gln) amidotransferase subunit A, mitochondrial (507 aa).

The disordered stretch occupies residues 29 to 51 (THPPEPIPPPPPPAPSSSPSPKQ). The span at 31–46 (PPEPIPPPPPPAPSSS) shows a compositional bias: pro residues. Catalysis depends on charge relay system residues Lys-57 and Ser-135. Ser-159 acts as the Acyl-ester intermediate in catalysis.

This sequence belongs to the amidase family. GatA subfamily. In terms of assembly, subunit of the heterotrimeric GatCAB amidotransferase (AdT) complex, composed of A, B and C subunits.

The protein resides in the mitochondrion. It carries out the reaction L-glutamyl-tRNA(Gln) + L-glutamine + ATP + H2O = L-glutaminyl-tRNA(Gln) + L-glutamate + ADP + phosphate + H(+). In terms of biological role, allows the formation of correctly charged Gln-tRNA(Gln) through the transamidation of misacylated Glu-tRNA(Gln) in the mitochondria. The reaction takes place in the presence of glutamine and ATP through an activated gamma-phospho-Glu-tRNA(Gln). This Podospora anserina (strain S / ATCC MYA-4624 / DSM 980 / FGSC 10383) (Pleurage anserina) protein is Glutamyl-tRNA(Gln) amidotransferase subunit A, mitochondrial.